A 346-amino-acid polypeptide reads, in one-letter code: L-threonine 3-dehydrogenase (346 aa).

Cysteine 42 contributes to the Zn(2+) binding site. Residues threonine 44 and histidine 47 each act as charge relay system in the active site. 6 residues coordinate Zn(2+): histidine 67, glutamate 68, cysteine 97, cysteine 100, cysteine 103, and cysteine 111. NAD(+) contacts are provided by residues isoleucine 179, aspartate 199, arginine 204, 266-268, and 291-292; these read LSL and IT.

The protein belongs to the zinc-containing alcohol dehydrogenase family. In terms of assembly, homotetramer. Zn(2+) is required as a cofactor.

The protein resides in the cytoplasm. It carries out the reaction L-threonine + NAD(+) = (2S)-2-amino-3-oxobutanoate + NADH + H(+). It participates in amino-acid degradation; L-threonine degradation via oxydo-reductase pathway; glycine from L-threonine: step 1/2. Its function is as follows. Catalyzes the NAD(+)-dependent oxidation of L-threonine to 2-amino-3-ketobutyrate. The sequence is that of L-threonine 3-dehydrogenase from Bacillus licheniformis (strain ATCC 14580 / DSM 13 / JCM 2505 / CCUG 7422 / NBRC 12200 / NCIMB 9375 / NCTC 10341 / NRRL NRS-1264 / Gibson 46).